The chain runs to 359 residues: Small ribosomal subunit biogenesis GTPase RsgA (359 aa).

Residues 101–259 (KRKGSQAIAS…LMDNPGIREV (159 aa)) enclose the CP-type G domain. GTP contacts are provided by residues 149–152 (NKKD) and 201–209 (GSSGAGKST). The Zn(2+) site is built by cysteine 284, cysteine 289, histidine 291, and cysteine 297. Positions 331–359 (DPEEARKKKQKDKQMSKALQKRLKDKGRK) are disordered. Basic residues predominate over residues 349–359 (LQKRLKDKGRK).

The protein belongs to the TRAFAC class YlqF/YawG GTPase family. RsgA subfamily. In terms of assembly, monomer. Associates with 30S ribosomal subunit, binds 16S rRNA. Zn(2+) is required as a cofactor.

Its subcellular location is the cytoplasm. One of several proteins that assist in the late maturation steps of the functional core of the 30S ribosomal subunit. Helps release RbfA from mature subunits. May play a role in the assembly of ribosomal proteins into the subunit. Circularly permuted GTPase that catalyzes slow GTP hydrolysis, GTPase activity is stimulated by the 30S ribosomal subunit. This Leptospira interrogans serogroup Icterohaemorrhagiae serovar copenhageni (strain Fiocruz L1-130) protein is Small ribosomal subunit biogenesis GTPase RsgA.